Here is a 438-residue protein sequence, read N- to C-terminus: Trigger factor (438 aa).

Positions 162-247 constitute a PPIase FKBP-type domain; it reads GDRVNINYQG…LNKVEAPKLP (86 aa).

The protein belongs to the FKBP-type PPIase family. Tig subfamily.

Its subcellular location is the cytoplasm. It carries out the reaction [protein]-peptidylproline (omega=180) = [protein]-peptidylproline (omega=0). Functionally, involved in protein export. Acts as a chaperone by maintaining the newly synthesized protein in an open conformation. Functions as a peptidyl-prolyl cis-trans isomerase. This Nitrosomonas eutropha (strain DSM 101675 / C91 / Nm57) protein is Trigger factor.